Reading from the N-terminus, the 778-residue chain is Zinc finger protein 749 (778 aa).

The KRAB domain maps to 8 to 101 (MVFEDVAIYF…ILKDILHLAE (94 aa)). The segment at 152–174 (FTCTQGGKDFTASSDLLQQQVLN) adopts a C2H2-type 1; degenerate zinc-finger fold. The segment at 196-218 (FNSSQGGKDFCHQHGLFEHQKTH) adopts a C2H2-type 2; degenerate zinc-finger fold. The segment at 224-246 (YEFSECGELFRYNSNLIKYQQNH) adopts a C2H2-type 3; degenerate zinc-finger fold. Residues 252-274 (YEGTEYGKTFIRKSNLVQHQKIH) form a C2H2-type 4; degenerate zinc finger. 6 consecutive C2H2-type zinc fingers follow at residues 298–320 (YECT…QKTH), 326–348 (YECN…QKVH), 354–376 (YECS…QRVH), 382–404 (FECS…QRVH), 410–432 (YKCS…LKIH), and 438–460 (YECT…QKIH). At Lys466 the chain carries N6-acetyllysine. C2H2-type zinc fingers lie at residues 483 to 505 (YTCS…QKIH) and 511 to 533 (YECT…EKIH). An N6-acetyllysine modification is found at Lys539. A C2H2-type 13; degenerate zinc finger spans residues 556 to 578 (YVCSECGKAFLTQAHLDGHQKIQ). 3 consecutive C2H2-type zinc fingers follow at residues 584–606 (YECN…QRIH), 612–634 (YKCS…QKVH), and 640–662 (YECS…QRVH). The segment at 668 to 690 (YECSNCGKFLRYRSTFIKHHKVC) adopts a C2H2-type 17; atypical zinc-finger fold. The C2H2-type 18 zinc finger occupies 696 to 718 (HECSKCRELFRTKSSLIIHQQSH). A C2H2-type 19; degenerate zinc finger spans residues 751-773 (YECGESSKVFKYNSSLIKHQIIH). Glycyl lysine isopeptide (Lys-Gly) (interchain with G-Cter in SUMO2) cross-links involve residues Lys761 and Lys768.

Belongs to the krueppel C2H2-type zinc-finger protein family.

The protein localises to the nucleus. May be involved in transcriptional regulation. The protein is Zinc finger protein 749 (ZNF749) of Homo sapiens (Human).